Consider the following 355-residue polypeptide: NADH-quinone oxidoreductase subunit H (355 aa).

8 helical membrane-spanning segments follow: residues 25–45 (VVRI…LILW), 91–111 (WLYL…WAVI), 126–146 (LLYA…AGWA), 170–190 (MGFA…SEIV), 205–225 (FLSW…ISGI), 253–273 (MAFA…SALA), 290–310 (FIPG…VFIW), and 330–350 (VFLP…MSPL).

It belongs to the complex I subunit 1 family. NDH-1 is composed of 14 different subunits. Subunits NuoA, H, J, K, L, M, N constitute the membrane sector of the complex.

The protein resides in the cell inner membrane. It catalyses the reaction a quinone + NADH + 5 H(+)(in) = a quinol + NAD(+) + 4 H(+)(out). NDH-1 shuttles electrons from NADH, via FMN and iron-sulfur (Fe-S) centers, to quinones in the respiratory chain. The immediate electron acceptor for the enzyme in this species is believed to be ubiquinone. Couples the redox reaction to proton translocation (for every two electrons transferred, four hydrogen ions are translocated across the cytoplasmic membrane), and thus conserves the redox energy in a proton gradient. This subunit may bind ubiquinone. The chain is NADH-quinone oxidoreductase subunit H from Burkholderia cenocepacia (strain HI2424).